We begin with the raw amino-acid sequence, 260 residues long: Triosephosphate isomerase (260 aa).

Substrate is bound at residue 11–13; the sequence is NWK. The active-site Electrophile is H103. The Proton acceptor role is filled by E175. Substrate is bound by residues G181, S220, and 241–242; that span reads GG.

It belongs to the triosephosphate isomerase family. In terms of assembly, homodimer.

It is found in the cytoplasm. It catalyses the reaction D-glyceraldehyde 3-phosphate = dihydroxyacetone phosphate. Its pathway is carbohydrate biosynthesis; gluconeogenesis. It participates in carbohydrate degradation; glycolysis; D-glyceraldehyde 3-phosphate from glycerone phosphate: step 1/1. In terms of biological role, involved in the gluconeogenesis. Catalyzes stereospecifically the conversion of dihydroxyacetone phosphate (DHAP) to D-glyceraldehyde-3-phosphate (G3P). The sequence is that of Triosephosphate isomerase from Shewanella frigidimarina (strain NCIMB 400).